The sequence spans 492 residues: ERAD-associated E3 ubiquitin-protein ligase HRD1A (492 aa).

Topologically, residues 1–3 are cytoplasmic; the sequence is MIR. The helical transmembrane segment at 4-24 threads the bilayer; the sequence is LRTYAGLSFMATLAVIYHAFS. Residues 25 to 40 are Lumenal-facing; it reads SRGQFYPATVYLSTSK. A helical transmembrane segment spans residues 41 to 61; it reads ISLVLLLNMCLVLMLSLWHLV. Topologically, residues 62-98 are cytoplasmic; it reads KFVFLGSLREAEVERLNEQAWRELMEILFAITIFRQD. A helical transmembrane segment spans residues 99 to 119; sequence FSSGFLPLVVTLLLIKALHWL. Residues 120–135 lie on the Lumenal side of the membrane; that stretch reads AQKRVEYIETTPSVSK. A helical membrane pass occupies residues 136–156; sequence LSHFRIVSFMGFLLLVDSLFM. Residues 157–170 lie on the Cytoplasmic side of the membrane; that stretch reads YSSIRHLIQSRQAS. The chain crosses the membrane as a helical span at residues 171–191; it reads VSLFFSFEYMILATTTVAIFV. Over 192–221 the chain is Lumenal; that stretch reads KYVFYVTDMLMDGQWEKKPVYTFYLELIRD. A helical membrane pass occupies residues 222 to 242; the sequence is LLHLSMYICFFFVIFMNYGVP. Topologically, residues 243 to 492 are cytoplasmic; the sequence is LHLLRELYET…KGKSVADAAE (250 aa). The segment at 292-330 adopts an RING-type; atypical zinc-finger fold; that stretch reads CIICREEMTNAKKLICGHLFHVHCLRSWLERQQTCPTCR. Disordered regions lie at residues 339-379 and 470-492; these read ATSA…NSLS and ETRKPESAGEPENKGKSVADAAE. The segment covering 351–378 has biased composition (low complexity); sequence QGSQQGTSSSGNQGSEISSSAGVSNNSL. A compositionally biased stretch (basic and acidic residues) spans 470 to 486; that stretch reads ETRKPESAGEPENKGKS.

This sequence belongs to the HRD1 family.

The protein resides in the endoplasmic reticulum membrane. The catalysed reaction is S-ubiquitinyl-[E2 ubiquitin-conjugating enzyme]-L-cysteine + [acceptor protein]-L-lysine = [E2 ubiquitin-conjugating enzyme]-L-cysteine + N(6)-ubiquitinyl-[acceptor protein]-L-lysine.. It participates in protein modification; protein ubiquitination. Its function is as follows. Probable component of the HRD1 ubiquitin ligase complex that mediates the rapid degradation of misfolded endoplasmic reticulum (ER) proteins, a process called ER-associated degradation (ERAD). Targets the misfolded LRR receptor kinase BRI1. Functions redundantly with HRD3B. The sequence is that of ERAD-associated E3 ubiquitin-protein ligase HRD1A from Arabidopsis thaliana (Mouse-ear cress).